We begin with the raw amino-acid sequence, 193 residues long: Potassium-transporting ATPase KdpC subunit (193 aa).

A helical transmembrane segment spans residues 14 to 34 (ITFTFLVLCGLVYPLIVTGIA).

This sequence belongs to the KdpC family. The system is composed of three essential subunits: KdpA, KdpB and KdpC.

The protein localises to the cell membrane. Part of the high-affinity ATP-driven potassium transport (or Kdp) system, which catalyzes the hydrolysis of ATP coupled with the electrogenic transport of potassium into the cytoplasm. This subunit acts as a catalytic chaperone that increases the ATP-binding affinity of the ATP-hydrolyzing subunit KdpB by the formation of a transient KdpB/KdpC/ATP ternary complex. This is Potassium-transporting ATPase KdpC subunit from Bacillus cereus (strain B4264).